We begin with the raw amino-acid sequence, 465 residues long: Chaperone protein dnaJ C76, chloroplastic (465 aa).

A chloroplast-targeting transit peptide spans 1–38 (MTPAIFSPTTLPPSTATWPCSTSQKLITVRSPLKFKCR). The region spanning 50-113 (DLYDLLGIDR…ISRQAYDKEQ (64 aa)) is the J domain. A disordered region spans residues 346–385 (AALPSSGNNNGSKASSNPQVTRKTFPSEEKPTSRRENRRQ). Positions 350 to 362 (SSGNNNGSKASSN) are enriched in low complexity. Positions 370–384 (FPSEEKPTSRRENRR) are enriched in basic and acidic residues.

This sequence belongs to the DnaJ family. Expressed in roots, exclusively in the stele.

It localises to the plastid. It is found in the chloroplast. Its function is as follows. May function together with HSC70 chaperone to assist protein folding and prevent protein aggregation during salt stress in the chloroplast. Involved in root development. Required for the position-dependent cell fate determination during root hair development. The chain is Chaperone protein dnaJ C76, chloroplastic from Arabidopsis thaliana (Mouse-ear cress).